Consider the following 265-residue polypeptide: Mlc titration factor A (265 aa).

Zn(2+) contacts are provided by His-111, His-148, His-152, and Glu-211.

This sequence belongs to the MtfA family. As to quaternary structure, interacts with Mlc. Zn(2+) is required as a cofactor.

It is found in the cytoplasm. Its function is as follows. Involved in the modulation of the activity of the glucose-phosphotransferase system (glucose-PTS). Interacts with the transcriptional repressor Mlc, preventing its interaction with DNA and leading to the modulation of expression of genes regulated by Mlc, including ptsG, which encodes the PTS system glucose-specific EIICB component. In terms of biological role, shows zinc-dependent metallopeptidase activity. In Escherichia coli O8 (strain IAI1), this protein is Mlc titration factor A.